Here is a 274-residue protein sequence, read N- to C-terminus: 2,3,4,5-tetrahydropyridine-2,6-dicarboxylate N-succinyltransferase (274 aa).

The substrate site is built by Arg104 and Asp141.

Belongs to the transferase hexapeptide repeat family. In terms of assembly, homotrimer.

It is found in the cytoplasm. It catalyses the reaction (S)-2,3,4,5-tetrahydrodipicolinate + succinyl-CoA + H2O = (S)-2-succinylamino-6-oxoheptanedioate + CoA. It participates in amino-acid biosynthesis; L-lysine biosynthesis via DAP pathway; LL-2,6-diaminopimelate from (S)-tetrahydrodipicolinate (succinylase route): step 1/3. The polypeptide is 2,3,4,5-tetrahydropyridine-2,6-dicarboxylate N-succinyltransferase (Shewanella sp. (strain ANA-3)).